We begin with the raw amino-acid sequence, 515 residues long: Iroquois-class homeodomain protein IRX-4 (515 aa).

The segment at residues 144–205 is a DNA-binding region (homeobox; TALE-type); sequence GTRRKNATRE…NARRRLKKEN (62 aa). 3 disordered regions span residues 205 to 258, 278 to 307, and 398 to 425; these read NKMT…ELEL, TPFQSLDSGPERIPASSDGPGTGKEASTTL, and GPTGVSATTPASSPAVTAPSGALDRHQD. Basic and acidic residues predominate over residues 214-223; it reads KCADEKRPYG. Residues 224–236 are compositionally biased toward acidic residues; it reads EGEEEEAGEEESR. Positions 237–257 are enriched in basic and acidic residues; the sequence is EEPLKSAKSEGHAGKDDKELE. Over residues 399–419 the composition is skewed to low complexity; that stretch reads PTGVSATTPASSPAVTAPSGA.

Belongs to the TALE/IRO homeobox family. As to quaternary structure, interacts with the vitamin D receptor VDR but doesn't affect its transactivation activity. Expressed in the developing central nervous system, skin, and vibrissae, but predominantly expressed in the cardiac ventricles of the developing heart. Not expressed in the developing metanephric kidney or adult kidney.

The protein resides in the nucleus. Functionally, likely to be an important mediator of ventricular differentiation during cardiac development. The polypeptide is Iroquois-class homeodomain protein IRX-4 (Irx4) (Mus musculus (Mouse)).